Here is a 584-residue protein sequence, read N- to C-terminus: DNA mismatch repair protein MutL (584 aa).

This sequence belongs to the DNA mismatch repair MutL/HexB family.

Its function is as follows. This protein is involved in the repair of mismatches in DNA. It is required for dam-dependent methyl-directed DNA mismatch repair. May act as a 'molecular matchmaker', a protein that promotes the formation of a stable complex between two or more DNA-binding proteins in an ATP-dependent manner without itself being part of a final effector complex. The protein is DNA mismatch repair protein MutL of Buchnera aphidicola subsp. Acyrthosiphon pisum (strain Tuc7).